The primary structure comprises 145 residues: Large-conductance mechanosensitive channel (145 aa).

The next 3 helical transmembrane spans lie at 10–30, 41–61, and 87–107; these read FALK…GAFA, IMPI…MFLI, and GNFI…FMMV.

It belongs to the MscL family. As to quaternary structure, homopentamer.

The protein localises to the cell inner membrane. Channel that opens in response to stretch forces in the membrane lipid bilayer. May participate in the regulation of osmotic pressure changes within the cell. This chain is Large-conductance mechanosensitive channel, found in Psychrobacter arcticus (strain DSM 17307 / VKM B-2377 / 273-4).